We begin with the raw amino-acid sequence, 270 residues long: Exosome complex component rrp43 (270 aa).

The protein belongs to the RNase PH family. In terms of assembly, component of the RNA exosome complex. Specifically part of the catalytically inactive RNA exosome core complex (Exo-9) which may associate with the catalytic subunits rrp66 and dis3 in cytoplasmic- and nuclear-specific RNA exosome complex forms. Exo-9 is formed by a hexameric base ring of RNase PH domain-containing subunits and a cap ring consisting of csl4, rrp4 and rrp40.

The protein localises to the cytoplasm. Its subcellular location is the nucleus. The protein resides in the nucleolus. In terms of biological role, non-catalytic component of the RNA exosome complex which has 3'-&gt;5' exoribonuclease activity and participates in a multitude of cellular RNA processing and degradation events. In the nucleus, the RNA exosome complex is involved in proper maturation of stable RNA species such as rRNA, snRNA and snoRNA, in the elimination of RNA processing by-products and non-coding 'pervasive' transcripts, such as antisense RNA species and cryptic unstable transcripts (CUTs), and of mRNAs with processing defects, thereby limiting or excluding their export to the cytoplasm. In the cytoplasm, the RNA exosome complex is involved in general mRNA turnover and in RNA surveillance pathways, preventing translation of aberrant mRNAs. The catalytic inactive RNA exosome core complex of 9 subunits (Exo-9) is proposed to play a pivotal role in the binding and presentation of RNA for ribonucleolysis, and to serve as a scaffold for the association with catalytic subunits and accessory proteins or complexes. ski6 is part of the hexameric ring of RNase PH domain-containing subunits proposed to form a central channel which threads RNA substrates for degradation. The chain is Exosome complex component rrp43 (rrp43) from Schizosaccharomyces pombe (strain 972 / ATCC 24843) (Fission yeast).